Here is an 82-residue protein sequence, read N- to C-terminus: Putative membrane protein insertion efficiency factor (82 aa).

Belongs to the UPF0161 family.

It localises to the cell inner membrane. Functionally, could be involved in insertion of integral membrane proteins into the membrane. This is Putative membrane protein insertion efficiency factor from Rickettsia felis (strain ATCC VR-1525 / URRWXCal2) (Rickettsia azadi).